A 356-amino-acid polypeptide reads, in one-letter code: S-adenosylmethionine:tRNA ribosyltransferase-isomerase (356 aa).

It belongs to the QueA family. Monomer.

It localises to the cytoplasm. It catalyses the reaction 7-aminomethyl-7-carbaguanosine(34) in tRNA + S-adenosyl-L-methionine = epoxyqueuosine(34) in tRNA + adenine + L-methionine + 2 H(+). It functions in the pathway tRNA modification; tRNA-queuosine biosynthesis. In terms of biological role, transfers and isomerizes the ribose moiety from AdoMet to the 7-aminomethyl group of 7-deazaguanine (preQ1-tRNA) to give epoxyqueuosine (oQ-tRNA). The chain is S-adenosylmethionine:tRNA ribosyltransferase-isomerase from Citrobacter koseri (strain ATCC BAA-895 / CDC 4225-83 / SGSC4696).